The chain runs to 480 residues: Chromosomal replication initiator protein DnaA (480 aa).

A domain I, interacts with DnaA modulators region spans residues 1–71; that stretch reads MNLTKVWNTT…REQLGSVVGF (71 aa). The segment at 71–139 is domain II; sequence FPVDVRIVLA…LELHRAVRSS (69 aa). A disordered region spans residues 91-115; it reads SINGRHAARDTRKSDHHAPLSGGYG. A compositionally biased stretch (basic and acidic residues) spans 97 to 108; sequence AARDTRKSDHHA. The segment at 140 to 356 is domain III, AAA+ region; sequence MLNPRYTFDR…GCLNRVTAYA (217 aa). ATP contacts are provided by glycine 184, glycine 186, lysine 187, and threonine 188. The domain IV, binds dsDNA stretch occupies residues 357 to 480; it reads QMYNIPVTIE…IRERLMNSAV (124 aa).

It belongs to the DnaA family. As to quaternary structure, oligomerizes as a right-handed, spiral filament on DNA at oriC.

It is found in the cytoplasm. Plays an essential role in the initiation and regulation of chromosomal replication. ATP-DnaA binds to the origin of replication (oriC) to initiate formation of the DNA replication initiation complex once per cell cycle. Binds the DnaA box (a 9 base pair repeat at the origin) and separates the double-stranded (ds)DNA. Forms a right-handed helical filament on oriC DNA; dsDNA binds to the exterior of the filament while single-stranded (ss)DNA is stabiized in the filament's interior. The ATP-DnaA-oriC complex binds and stabilizes one strand of the AT-rich DNA unwinding element (DUE), permitting loading of DNA polymerase. After initiation quickly degrades to an ADP-DnaA complex that is not apt for DNA replication. Binds acidic phospholipids. This is Chromosomal replication initiator protein DnaA from Roseiflexus castenholzii (strain DSM 13941 / HLO8).